The chain runs to 200 residues: 3-isopropylmalate dehydratase small subunit (200 aa).

Belongs to the LeuD family. LeuD type 1 subfamily. In terms of assembly, heterodimer of LeuC and LeuD.

It catalyses the reaction (2R,3S)-3-isopropylmalate = (2S)-2-isopropylmalate. Its pathway is amino-acid biosynthesis; L-leucine biosynthesis; L-leucine from 3-methyl-2-oxobutanoate: step 2/4. Catalyzes the isomerization between 2-isopropylmalate and 3-isopropylmalate, via the formation of 2-isopropylmaleate. The protein is 3-isopropylmalate dehydratase small subunit of Edwardsiella ictaluri (strain 93-146).